A 38-amino-acid chain; its full sequence is Photosystem II reaction center protein L (38 aa).

Residues 17–37 (SLFLGRLLIFVLGILFSSYIF) form a helical membrane-spanning segment.

Belongs to the PsbL family. As to quaternary structure, PSII is composed of 1 copy each of membrane proteins PsbA, PsbB, PsbC, PsbD, PsbE, PsbF, PsbH, PsbI, PsbJ, PsbK, PsbL, PsbM, PsbT, PsbX, PsbY, PsbZ, Psb30/Ycf12, peripheral proteins PsbO, CyanoQ (PsbQ), PsbU, PsbV and a large number of cofactors. It forms dimeric complexes.

It localises to the cellular thylakoid membrane. Functionally, one of the components of the core complex of photosystem II (PSII). PSII is a light-driven water:plastoquinone oxidoreductase that uses light energy to abstract electrons from H(2)O, generating O(2) and a proton gradient subsequently used for ATP formation. It consists of a core antenna complex that captures photons, and an electron transfer chain that converts photonic excitation into a charge separation. This subunit is found at the monomer-monomer interface and is required for correct PSII assembly and/or dimerization. This is Photosystem II reaction center protein L from Prochlorothrix hollandica.